Consider the following 938-residue polypeptide: Glutamate receptor ionotropic, NMDA 1 (938 aa).

The signal sequence occupies residues 1–18; the sequence is MSTMHLLTFALLFSCSFA. The Extracellular portion of the chain corresponds to 19–559; that stretch reads RAACDPKIVN…TLDSFMQPFQ (541 aa). N-linked (GlcNAc...) asparagine glycans are attached at residues Asn-61, Asn-203, Asn-239, Asn-276, Asn-300, Asn-350, Asn-368, Asn-440, Asn-471, and Asn-491. A disulfide bridge links Cys-79 with Cys-308. Disulfide bonds link Cys-420–Cys-454 and Cys-436–Cys-455. Residues Pro-516, Thr-518, and Arg-523 each coordinate glycine. A helical membrane pass occupies residues 560–580; it reads STLWLLVGLSVHVVAVMLYLL. At 581–602 the chain is on the cytoplasmic side; the sequence is DRFSPFGRFKVNSEEEEEDALT. The discontinuously helical intramembrane region spans 603 to 624; sequence LSSAMWFSWGVLLNSGIGEGAP. The pore-forming stretch occupies residues 603–624; that stretch reads LSSAMWFSWGVLLNSGIGEGAP. Residues 625–630 are Cytoplasmic-facing; that stretch reads RSFSAR. A helical transmembrane segment spans residues 631–647; sequence ILGMVWAGFAMIIVASY. Residues 648–812 lie on the Extracellular side of the membrane; that stretch reads TANLAAFLVL…NAPATLTFEN (165 aa). Asn-674 carries an N-linked (GlcNAc...) asparagine glycan. 2 residues coordinate glycine: Ser-688 and Asp-732. Residues Cys-744 and Cys-798 are joined by a disulfide bond. A glycan (N-linked (GlcNAc...) asparagine) is linked at Asn-771. The chain crosses the membrane as a helical span at residues 813–833; it reads MAGVFMLVAGGIVAGIFLIFI. The Cytoplasmic segment spans residues 834–938; sequence EIAYKRHKDA…LQLCSRHRES (105 aa). Ser-889 bears the Phosphoserine; by PKC mark. Residues 889 to 938 form a disordered region; sequence SSFKRRRSSKDTSTGGGRGALQNQKDTVLPRRAIEREEGQLQLCSRHRES. Ser-890 bears the Phosphoserine mark. Phosphoserine; by PKC is present on residues Ser-896 and Ser-897. A compositionally biased stretch (basic and acidic residues) spans 916–927; that stretch reads VLPRRAIEREEG.

Belongs to the glutamate-gated ion channel (TC 1.A.10.1) family. NR1/GRIN1 subfamily. As to quaternary structure, heterotetramer; the NMDAR subunits are modular and harbor tiered domains that function in concert to regulate opening and closing of the cation-selective ion channel pore. Forms heterotetrameric channels composed of two GluN1/zeta subunits (GRIN1), and two identical GluN2/epsilon subunits (GRIN2A, GRIN2B, GRIN2C or GRIN2D) or GluN3 subunits (GRIN3A or GRIN3B) (in vitro). Can also form heterotetrameric channels that contain at least two GluN1 subunits and at least two different GluN2 subunits (or a combination of one GluN2 and one GluN3 subunits) (in vitro). In vivo, the subunit composition may vary in function of the expression levels of the different subunits. Found in a complex with GRIN2A or GRIN2B, GRIN3A and PPP2CB. Found in a complex with GRIN2A or GRIN2B and GRIN3B. Interacts with SNX27 (via PDZ domain); the interaction is required for recycling to the plasma membrane when endocytosed and prevent degradation in lysosomes. Interacts with DLG4 and MPDZ. Interacts with LRFN1 and LRFN2. Interacts with MYZAP. Found in a complex with DLG4 and PRR7. Found in a complex with GRIN2B and PRR7. Interacts with PRR7; the interaction is reduced following NMDA receptor activity. Post-translationally, NMDA is probably regulated by C-terminal phosphorylation of an isoform of GRIN1 by PKC. Dephosphorylated on Ser-897 probably by protein phosphatase 2A (PPP2CB). Its phosphorylated state is influenced by the formation of the NMDAR-PPP2CB complex and the NMDAR channel activity. Detected in brain (at protein level). Detected in brain.

The protein resides in the cell membrane. Its subcellular location is the postsynaptic cell membrane. The protein localises to the postsynaptic density membrane. It is found in the synaptic cell membrane. It catalyses the reaction Ca(2+)(in) = Ca(2+)(out). The catalysed reaction is Na(+)(in) = Na(+)(out). The enzyme catalyses K(+)(in) = K(+)(out). Functionally, component of N-methyl-D-aspartate (NMDA) receptors (NMDARs) that function as heterotetrameric, ligand-gated cation channels with high calcium permeability and voltage-dependent block by Mg(2+). NMDARs participate in synaptic plasticity for learning and memory formation by contributing to the long-term potentiation (LTP). Channel activation requires binding of the neurotransmitter L-glutamate to the GluN2 subunit, glycine or D-serine binding to the GluN1 subunit, plus membrane depolarization to eliminate channel inhibition by Mg(2+). NMDARs mediate simultaneously the potasium efflux and the influx of calcium and sodium. Each GluN2 or GluN3 subunit confers differential attributes to channel properties, including activation, deactivation and desensitization kinetics, pH sensitivity, Ca2(+) permeability, and binding to allosteric modulators. In Mus musculus (Mouse), this protein is Glutamate receptor ionotropic, NMDA 1.